Consider the following 117-residue polypeptide: Appetite-regulating hormone (117 aa).

Positions methionine 1–alanine 23 are cleaved as a signal peptide. Residue serine 26 is the site of O-decanoyl serine; alternate attachment. Residue serine 26 is the site of O-hexanoyl serine; alternate attachment. The O-octanoyl serine; alternate moiety is linked to residue serine 26. Residues serine 29 to alanine 52 form a disordered region. Basic and acidic residues predominate over residues glutamate 31–lysine 43. Positions alanine 52–arginine 75 are cleaved as a propeptide — removed in mature form. Leucine amide is present on leucine 98. Residues glycine 99 to glutamate 117 constitute a propeptide, removed in mature form.

This sequence belongs to the motilin family. Post-translationally, O-octanoylated by GOAT/MBOAT4. O-octanoylation or O-decanoylation is essential for ghrelin activity. The O-decanoylated forms Ghrelin-27-C10 and Ghrelin-28-C10 differ in the length of the carbon backbone of the carboxylic acid bound to Ser-26. A small fraction of ghrelin, ghrelin-27-C10:1, ghrelin-27-C10:2, ghrelin-28-C8:1, ghrelin-28-C10:1, and ghrelin-28-C10:2, may be modified with singly or doubly unsaturated carboxylic acids. In terms of processing, amidation of Leu-98 is essential for obestatin activity.

It is found in the secreted. Its function is as follows. Ghrelin is the ligand for growth hormone secretagogue receptor type 1 (GHSR). Induces the release of growth hormone from the pituitary. Has an appetite-stimulating effect, induces adiposity and stimulates gastric acid secretion. Involved in growth regulation. In terms of biological role, obestatin may be the ligand for GPR39. May have an appetite-reducing effect resulting in decreased food intake. May reduce gastric emptying activity and jejunal motility. The sequence is that of Appetite-regulating hormone (GHRL) from Felis catus (Cat).